The primary structure comprises 230 residues: Protein GrpE (230 aa).

Disordered stretches follow at residues 1–26 (MADE…DREA) and 209–230 (GVSK…EDNA). Residues 221–230 (NGASTSEDNA) show a composition bias toward polar residues.

This sequence belongs to the GrpE family. Homodimer.

It localises to the cytoplasm. In terms of biological role, participates actively in the response to hyperosmotic and heat shock by preventing the aggregation of stress-denatured proteins, in association with DnaK and GrpE. It is the nucleotide exchange factor for DnaK and may function as a thermosensor. Unfolded proteins bind initially to DnaJ; upon interaction with the DnaJ-bound protein, DnaK hydrolyzes its bound ATP, resulting in the formation of a stable complex. GrpE releases ADP from DnaK; ATP binding to DnaK triggers the release of the substrate protein, thus completing the reaction cycle. Several rounds of ATP-dependent interactions between DnaJ, DnaK and GrpE are required for fully efficient folding. This is Protein GrpE from Brucella suis biovar 1 (strain 1330).